The chain runs to 133 residues: Ribosome-binding factor A (133 aa).

The protein belongs to the RbfA family. Monomer. Binds 30S ribosomal subunits, but not 50S ribosomal subunits or 70S ribosomes.

It localises to the cytoplasm. In terms of biological role, one of several proteins that assist in the late maturation steps of the functional core of the 30S ribosomal subunit. Associates with free 30S ribosomal subunits (but not with 30S subunits that are part of 70S ribosomes or polysomes). Required for efficient processing of 16S rRNA. May interact with the 5'-terminal helix region of 16S rRNA. The chain is Ribosome-binding factor A from Cronobacter sakazakii (strain ATCC BAA-894) (Enterobacter sakazakii).